A 372-amino-acid polypeptide reads, in one-letter code: Actin-related protein 2/3 complex subunit 1B (372 aa).

WD repeat units lie at residues Phe6–Val45, Glu50–Thr89, Arg94–Lys135, Pro140–Arg179, Ser242–Ser280, and Leu324–Lys367.

This sequence belongs to the WD repeat ARPC1 family. Component of the Arp2/3 complex composed of ACTR2/ARP2, ACTR3/ARP3, ARPC1B/p41-ARC, ARPC2/p34-ARC, ARPC3/p21-ARC, ARPC4/p20-ARC and ARPC5/p16-ARC.

The protein localises to the cytoplasm. Its subcellular location is the cytoskeleton. It is found in the nucleus. Functionally, component of the Arp2/3 complex, a multiprotein complex that mediates actin polymerization upon stimulation by nucleation-promoting factor (NPF). The Arp2/3 complex mediates the formation of branched actin networks in the cytoplasm, providing the force for cell motility. In addition to its role in the cytoplasmic cytoskeleton, the Arp2/3 complex also promotes actin polymerization in the nucleus, thereby regulating gene transcription and repair of damaged DNA. The Arp2/3 complex promotes homologous recombination (HR) repair in response to DNA damage by promoting nuclear actin polymerization, leading to drive motility of double-strand breaks (DSBs). The protein is Actin-related protein 2/3 complex subunit 1B of Homo sapiens (Human).